The following is a 550-amino-acid chain: Kinase suppressor of Ras B (550 aa).

Composition is skewed to low complexity over residues 21 to 56 (SFSS…SNPI) and 63 to 75 (ATSS…STSS). Residues 21-87 (SFSSWRRSST…PPPASAPPRI (67 aa)) are disordered. A Phorbol-ester/DAG-type zinc finger spans residues 90-145 (YHKMVPSKSKFRQCDVCEHIFIFDFVRKQHLDDVYACNVCGIRVHKGCLDRVKNDC). The tract at residues 172-196 (TTASISKSLTTSPTCSTSTTMSPAG) is disordered. Residues 177–193 (SKSLTTSPTCSTSTTMS) show a composition bias toward low complexity. Positions 248-528 (VDVMTKIGDG…FQQIVKRITV (281 aa)) constitute a Protein kinase domain. The interval 530–550 (MPRKESNKQKRRSTAHENPLF) is disordered.

This sequence belongs to the protein kinase superfamily. TKL Ser/Thr protein kinase family. Interacts with ndk-1.

Its function is as follows. Probable inactive protein kinase which positively regulates Ras-mediated signaling probably acting at the level of let-60/ras or/and lin-45/raf. In the germline, regulates meiotic progression during oogenesis and mpk-1 (isoform b) phosphorylation. Plays a role in meiotic recombination events. Functions redundantly with ksr-1 in the Ras-mediated regulation of larval survival, the development of excretory canal, in determining vulval precursor cell fate during vulval induction and in mpk-1 phosphorylation in somatic cells. In Caenorhabditis elegans, this protein is Kinase suppressor of Ras B.